The following is a 70-amino-acid chain: NAD(P)H-quinone oxidoreductase subunit O (70 aa).

The protein belongs to the complex I NdhO subunit family. As to quaternary structure, NDH-1 can be composed of about 15 different subunits; different subcomplexes with different compositions have been identified which probably have different functions.

The protein resides in the cellular thylakoid membrane. The catalysed reaction is a plastoquinone + NADH + (n+1) H(+)(in) = a plastoquinol + NAD(+) + n H(+)(out). The enzyme catalyses a plastoquinone + NADPH + (n+1) H(+)(in) = a plastoquinol + NADP(+) + n H(+)(out). NDH-1 shuttles electrons from an unknown electron donor, via FMN and iron-sulfur (Fe-S) centers, to quinones in the respiratory and/or the photosynthetic chain. The immediate electron acceptor for the enzyme in this species is believed to be plastoquinone. Couples the redox reaction to proton translocation, and thus conserves the redox energy in a proton gradient. Cyanobacterial NDH-1 also plays a role in inorganic carbon-concentration. In Nostoc sp. (strain PCC 7120 / SAG 25.82 / UTEX 2576), this protein is NAD(P)H-quinone oxidoreductase subunit O.